Consider the following 613-residue polypeptide: Dihydroxy-acid dehydratase (613 aa).

D81 provides a ligand contact to Mg(2+). C122 contributes to the [2Fe-2S] cluster binding site. Mg(2+) contacts are provided by D123 and K124. The residue at position 124 (K124) is an N6-carboxylysine. C195 is a binding site for [2Fe-2S] cluster. E491 is a Mg(2+) binding site. Catalysis depends on S517, which acts as the Proton acceptor.

The protein belongs to the IlvD/Edd family. As to quaternary structure, homodimer. [2Fe-2S] cluster serves as cofactor. It depends on Mg(2+) as a cofactor.

It carries out the reaction (2R)-2,3-dihydroxy-3-methylbutanoate = 3-methyl-2-oxobutanoate + H2O. It catalyses the reaction (2R,3R)-2,3-dihydroxy-3-methylpentanoate = (S)-3-methyl-2-oxopentanoate + H2O. It participates in amino-acid biosynthesis; L-isoleucine biosynthesis; L-isoleucine from 2-oxobutanoate: step 3/4. Its pathway is amino-acid biosynthesis; L-valine biosynthesis; L-valine from pyruvate: step 3/4. Functionally, functions in the biosynthesis of branched-chain amino acids. Catalyzes the dehydration of (2R,3R)-2,3-dihydroxy-3-methylpentanoate (2,3-dihydroxy-3-methylvalerate) into 2-oxo-3-methylpentanoate (2-oxo-3-methylvalerate) and of (2R)-2,3-dihydroxy-3-methylbutanoate (2,3-dihydroxyisovalerate) into 2-oxo-3-methylbutanoate (2-oxoisovalerate), the penultimate precursor to L-isoleucine and L-valine, respectively. This is Dihydroxy-acid dehydratase from Nitrobacter hamburgensis (strain DSM 10229 / NCIMB 13809 / X14).